Consider the following 275-residue polypeptide: T-cell ecto-ADP-ribosyltransferase 1 (275 aa).

Residues 1 to 20 form the signal peptide; the sequence is MPSNICKFFLTWWLIQQVTG. Intrachain disulfides connect cysteine 41–cysteine 243 and cysteine 141–cysteine 193. Asparagine 58 is a glycosylation site (N-linked (GlcNAc...) asparagine). A TR mART core domain is found at 61-238; sequence EKLKVAWEEA…IFLDSPKRKK (178 aa). Positions 98, 146, and 164 each coordinate NAD(+). The active site involves arginine 146. Residue serine 167 is part of the active site. Residue serine 202 participates in NAD(+) binding. Glutamate 209 is an active-site residue. Residue serine 246 is the site of GPI-anchor amidated serine attachment. The propeptide at 247–275 is removed in mature form; sequence SAGTRESCVSLFLVVLTSLLVQLLCLAEP.

The protein belongs to the Arg-specific ADP-ribosyltransferase family. As to expression, postthymic T-cells.

It is found in the cell membrane. It carries out the reaction L-arginyl-[protein] + NAD(+) = N(omega)-(ADP-D-ribosyl)-L-arginyl-[protein] + nicotinamide + H(+). The catalysed reaction is NAD(+) + H2O = ADP-D-ribose + nicotinamide + H(+). Has NAD(+) glycohydrolase activity and extremely low ADP-ribosyltransferase activity. The protein is T-cell ecto-ADP-ribosyltransferase 1 (Art2a) of Rattus norvegicus (Rat).